Consider the following 417-residue polypeptide: MQTYLVGGAVRDYLLGLPVKDRDWVVVGADAQTMLAQGFQPVGKDFPVFLHPETHEEYALARTERKTAKGYAGFSFHADKDVTLEQDLMRRDLTINAMAQDAGGKIIDPFGGQRDLAAGILRHVSPAFAEDPVRILRTARFAARYRFEIAEETIKLMRQMVENGEADALVAERVWQELAKGLMEKNPRKMIEVLRECGALKVLLPEVNALFGVPQRADYHPEIDSGIHTLMTLQRAADMGLSLPERYAALLHDLGKAKTPPDILPRHHGHDLAGVEPVREVNQRLRAPKHCAELAELVCRWHIIFHQVGQLKSQTILNVLKKTDAFRRPERFQTALNVCIADTQGRLNREHTPYPQRAHWLALLEAANQADSGKIAAECRAQGKAHLIAEQIDRMRLAQIAPLQKAFQAAQDKTEKH.

ATP is bound by residues Gly8 and Arg11. Residues Gly8 and Arg11 each coordinate CTP. Asp21 and Asp23 together coordinate Mg(2+). The ATP site is built by Arg91, Arg137, and Arg140. Residues Arg91, Arg137, and Arg140 each coordinate CTP. The region spanning 225–326 (SGIHTLMTLQ…LNVLKKTDAF (102 aa)) is the HD domain.

Belongs to the tRNA nucleotidyltransferase/poly(A) polymerase family. Bacterial CCA-adding enzyme type 1 subfamily. As to quaternary structure, monomer. Can also form homodimers and oligomers. It depends on Mg(2+) as a cofactor. Ni(2+) serves as cofactor.

It carries out the reaction a tRNA precursor + 2 CTP + ATP = a tRNA with a 3' CCA end + 3 diphosphate. It catalyses the reaction a tRNA with a 3' CCA end + 2 CTP + ATP = a tRNA with a 3' CCACCA end + 3 diphosphate. Its function is as follows. Catalyzes the addition and repair of the essential 3'-terminal CCA sequence in tRNAs without using a nucleic acid template. Adds these three nucleotides in the order of C, C, and A to the tRNA nucleotide-73, using CTP and ATP as substrates and producing inorganic pyrophosphate. tRNA 3'-terminal CCA addition is required both for tRNA processing and repair. Also involved in tRNA surveillance by mediating tandem CCA addition to generate a CCACCA at the 3' terminus of unstable tRNAs. While stable tRNAs receive only 3'-terminal CCA, unstable tRNAs are marked with CCACCA and rapidly degraded. This is Multifunctional CCA protein from Neisseria meningitidis serogroup C (strain 053442).